Consider the following 406-residue polypeptide: Arginine deiminase (406 aa).

Cysteine 396 acts as the Amidino-cysteine intermediate in catalysis.

It belongs to the arginine deiminase family.

The protein localises to the cytoplasm. The catalysed reaction is L-arginine + H2O = L-citrulline + NH4(+). It participates in amino-acid degradation; L-arginine degradation via ADI pathway; carbamoyl phosphate from L-arginine: step 1/2. The chain is Arginine deiminase from Vibrio vulnificus (strain YJ016).